A 324-amino-acid polypeptide reads, in one-letter code: NADH-quinone oxidoreductase subunit H (324 aa).

A run of 8 helical transmembrane segments spans residues Ile11 to Phe31, Val81 to Val101, Ile114 to Gly134, Val154 to Phe174, Leu186 to Val206, Phe237 to Phe257, Leu265 to Ile285, and Val304 to Ala324.

Belongs to the complex I subunit 1 family. As to quaternary structure, NDH-1 is composed of 13 different subunits. Subunits NuoA, H, J, K, L, M, N constitute the membrane sector of the complex.

It localises to the cell inner membrane. It carries out the reaction a quinone + NADH + 5 H(+)(in) = a quinol + NAD(+) + 4 H(+)(out). Functionally, NDH-1 shuttles electrons from NADH, via FMN and iron-sulfur (Fe-S) centers, to quinones in the respiratory chain. The immediate electron acceptor for the enzyme in this species is believed to be ubiquinone. Couples the redox reaction to proton translocation (for every two electrons transferred, four hydrogen ions are translocated across the cytoplasmic membrane), and thus conserves the redox energy in a proton gradient. This subunit may bind ubiquinone. This Pectobacterium atrosepticum (strain SCRI 1043 / ATCC BAA-672) (Erwinia carotovora subsp. atroseptica) protein is NADH-quinone oxidoreductase subunit H.